The following is a 739-amino-acid chain: MANWCMSVLMFSFVTVYTIVTSLGQGIRRGFRAIVDEVENIYGDMCAGFKVALSKLSVSWIVVVGMIFVLNSLVVGLVPTLTMVAIIAACVGAKYGGRVPRYIRAHVDRIRKSWEKGVDDDDCCAPLPETSLERVPTKLRPRLACKIAVRAIAKVGLLKRSEANSMVYQRVCLDVMESMKMRWHDRLVILPQAVLACLERPEEVEEVMKAIEASCKGRFDVYXGCLLQHRGYNTAIISAIPDGVLLNHEGMVVRKGAPITTERKWYSFAGYASTYEYIVHNSSLVNVCRGLVERVFCVVRDGKLQRPLRPKNNVFERKLGNVGRRISSIVGYCPAMTRSEFCESYSGTRRATYERARLSLDVLPCTRKDAYLKTFVKAEKINITLKPDPAPRVIQPRDPRYNVEVGRYLKPLEPRLMKAIDKLWGEKTAIKGYTVEKVGEILHQKSLRFKNPCFVGLDASRFDQHCSRQALEWEHSVYNAIFRDPYLSELLTWQIDNVGTAYLKDGFVRYRVDGCRMSGDMNTSMGNYLIMSCLVYQFCKDIGIDASLANCGDDCVLYLEKEDLPKLKALPDWFGKMGYSMKVEKPVFTVEEIEFCQQHPVQLSRGYVMVRRPDVCLTKDLCVVRGGMTTERLQRWLYAQHDGGLALTGDCPVLGAFYRRFPSGESHGELSEYSDAHKFKAGKQYGEINSLARYSFWLAFGITPDEQLAIERDLMNWTPNVVPGSCDPRPTLLDYCSDN.

Positions 452 to 567 constitute a RdRp catalytic domain; it reads PCFVGLDASR…YLEKEDLPKL (116 aa).

Belongs to the tombusviridae RNA polymerase family.

The catalysed reaction is RNA(n) + a ribonucleoside 5'-triphosphate = RNA(n+1) + diphosphate. Functionally, RNA-dependent RNA polymerase that plays an essential role in the virus replication. The chain is RNA-directed RNA polymerase from Pothos latent virus (isolate Pigeonpea/India) (PoLV).